Here is a 288-residue protein sequence, read N- to C-terminus: Phenazine biosynthesis-like domain-containing protein (288 aa).

Residue E46 is part of the active site.

This sequence belongs to the PhzF family. In terms of assembly, interacts with UNRIP/MAWD.

The sequence is that of Phenazine biosynthesis-like domain-containing protein (Pbld) from Rattus norvegicus (Rat).